Reading from the N-terminus, the 98-residue chain is ESAT-6-like protein EsxM (98 aa).

It belongs to the WXG100 family. CFP-10 subfamily.

The protein resides in the secreted. The protein is ESAT-6-like protein EsxM (esxM) of Mycobacterium bovis (strain ATCC BAA-935 / AF2122/97).